Consider the following 506-residue polypeptide: Glycine--tRNA ligase (506 aa).

Substrate contacts are provided by R99 and E189. Residues 221-223 (RNE), 231-236 (FRVREF), 305-306 (EL), and 364-367 (GVDR) each bind ATP. Residue 236–240 (FEQME) coordinates substrate. Residue 360–364 (EPSAG) participates in substrate binding.

This sequence belongs to the class-II aminoacyl-tRNA synthetase family. As to quaternary structure, homodimer.

It is found in the cytoplasm. The catalysed reaction is tRNA(Gly) + glycine + ATP = glycyl-tRNA(Gly) + AMP + diphosphate. Its function is as follows. Catalyzes the attachment of glycine to tRNA(Gly). The sequence is that of Glycine--tRNA ligase from Thermus thermophilus (strain ATCC BAA-163 / DSM 7039 / HB27).